A 240-amino-acid polypeptide reads, in one-letter code: LexA repressor (240 aa).

The segment at residues 26–46 (FDEMKDALDLASKSGIHRLIT) is a DNA-binding region (H-T-H motif). Residues 78–113 (QPRRGFSPSVIEGSLGKPQPVQPPAPAKPANDENNS) are disordered. Catalysis depends on for autocatalytic cleavage activity residues Ser-160 and Lys-198.

This sequence belongs to the peptidase S24 family. Homodimer.

It catalyses the reaction Hydrolysis of Ala-|-Gly bond in repressor LexA.. In terms of biological role, represses a number of genes involved in the response to DNA damage (SOS response), including recA and lexA. In the presence of single-stranded DNA, RecA interacts with LexA causing an autocatalytic cleavage which disrupts the DNA-binding part of LexA, leading to derepression of the SOS regulon and eventually DNA repair. The protein is LexA repressor of Rhizobium rhizogenes (strain K84 / ATCC BAA-868) (Agrobacterium radiobacter).